The following is a 338-amino-acid chain: Heat-inducible transcription repressor HrcA (338 aa).

This sequence belongs to the HrcA family.

Negative regulator of class I heat shock genes (grpE-dnaK-dnaJ and groELS operons). Prevents heat-shock induction of these operons. The chain is Heat-inducible transcription repressor HrcA from Bacillus cereus (strain ATCC 10987 / NRS 248).